Consider the following 907-residue polypeptide: Isoleucine--tRNA ligase (907 aa).

Positions 57 to 67 (PFANGKAHMGS) match the 'HIGH' region motif. Residue glutamate 549 participates in L-isoleucyl-5'-AMP binding. Positions 590 to 594 (KLSKS) match the 'KMSKS' region motif. Residue lysine 593 coordinates ATP. Zn(2+) is bound by residues cysteine 867, cysteine 870, cysteine 889, and cysteine 892.

It belongs to the class-I aminoacyl-tRNA synthetase family. IleS type 1 subfamily. In terms of assembly, monomer. Requires Zn(2+) as cofactor.

Its subcellular location is the cytoplasm. The enzyme catalyses tRNA(Ile) + L-isoleucine + ATP = L-isoleucyl-tRNA(Ile) + AMP + diphosphate. Its function is as follows. Catalyzes the attachment of isoleucine to tRNA(Ile). As IleRS can inadvertently accommodate and process structurally similar amino acids such as valine, to avoid such errors it has two additional distinct tRNA(Ile)-dependent editing activities. One activity is designated as 'pretransfer' editing and involves the hydrolysis of activated Val-AMP. The other activity is designated 'posttransfer' editing and involves deacylation of mischarged Val-tRNA(Ile). The protein is Isoleucine--tRNA ligase of Methylacidiphilum infernorum (isolate V4) (Methylokorus infernorum (strain V4)).